Here is a 184-residue protein sequence, read N- to C-terminus: Lactoylglutathione lyase (184 aa).

Residue alanine 2 is modified to N-acetylalanine. Cysteine 19 and cysteine 20 are joined by a disulfide. Positions 31–177 (LLQQTMLRVK…DGYWIEILNP (147 aa)) constitute a VOC domain. The substrate site is built by glutamine 34 and arginine 38. Glutamine 34 contributes to the Zn(2+) binding site. The cysteines at positions 61 and 139 are disulfide-linked. Lysine 88 carries the post-translational modification N6-succinyllysine. Zn(2+) is bound at residue glutamate 100. Asparagine 104 contacts substrate. Threonine 107 carries the phosphothreonine modification. Residues arginine 123 and histidine 127 each contribute to the substrate site. Zn(2+) is bound at residue histidine 127. Cysteine 139 is modified (S-glutathionyl cysteine; alternate). Lysine 148 carries the post-translational modification N6-acetyllysine; alternate. The residue at position 148 (lysine 148) is an N6-succinyllysine; alternate. 157 to 158 (KM) is a binding site for substrate. Glutamate 173 provides a ligand contact to Zn(2+). The active-site Proton donor/acceptor is the glutamate 173.

Belongs to the glyoxalase I family. In terms of assembly, homodimer. The cofactor is Zn(2+). Post-translationally, glutathionylation at Cys-139 inhibits enzyme activity. Phosphorylated at Thr-107 in the presence of CaMK2. However, this is a consensus site for phosphorylation by CK2 so phosphorylation may be mediated by CK2 rather than CaMK2. Phosphorylation is induced by TNF and suppresses the TNF-induced transcriptional activity of NF-kappa-B. In terms of processing, exists in a nitric oxide (NO)-modified form. The exact nature of the modification is unknown, but it suppresses the TNF-induced transcriptional activity of NF-kappa-B.

The enzyme catalyses (R)-S-lactoylglutathione = methylglyoxal + glutathione. The protein operates within secondary metabolite metabolism; methylglyoxal degradation; (R)-lactate from methylglyoxal: step 1/2. With respect to regulation, regulated by oxidation of Cys-139 in response to the redox state of the cell. Results in the alternative formation of cystine or glutathione-bound cysteine, the latter modification leading to reduced enzyme activity. In terms of biological role, catalyzes the conversion of hemimercaptal, formed from methylglyoxal and glutathione, to S-lactoylglutathione. Involved in the regulation of TNF-induced transcriptional activity of NF-kappa-B. Required for normal osteoclastogenesis. This Homo sapiens (Human) protein is Lactoylglutathione lyase (GLO1).